Reading from the N-terminus, the 747-residue chain is Histone-lysine N-methyltransferase EZH1 (747 aa).

Residues 188 to 231 (DEEEDGHNDPSDGKQDDSKEDLPVTRKRKRHAIEGNKKSSKKQF) form a disordered region. A compositionally biased stretch (basic and acidic residues) spans 194 to 211 (HNDPSDGKQDDSKEDLPV). A Glycyl lysine isopeptide (Lys-Gly) (interchain with G-Cter in SUMO2) cross-link involves residue K327. Positions 368-414 (VSASCSNASASAMAETKEGDSDRDTGNDWASSSSEANSRCQTPTKQK) are disordered. Over residues 369 to 381 (SASCSNASASAMA) the composition is skewed to low complexity. The span at 382–393 (ETKEGDSDRDTG) shows a compositional bias: basic and acidic residues. The span at 395–414 (DWASSSSEANSRCQTPTKQK) shows a compositional bias: polar residues. Positions 491–496 (QKKKRK) match the Nuclear localization signal motif. Residues 504 to 606 (CRKIQLKKDN…CKVVSCKNCS (103 aa)) enclose the CXC domain. In terms of domain architecture, SET spans 613 to 728 (KHLLLAPSDV…AGEELFFDYR (116 aa)).

This sequence belongs to the class V-like SAM-binding methyltransferase superfamily. Histone-lysine methyltransferase family. EZ subfamily. Component of the PRC2/EED-EZH1 complex, which includes EED, EZH1, SUZ12, RBBP4 and AEBP2. The PRC2/EED-EZH1 is less abundant than the PRC2/EED-EZH2 complex, has weak methyltransferase activity and compacts chromatin in the absence of the methyltransferase cofactor S-adenosyl-L-methionine (SAM). Interacts with EZHIP; the interaction blocks EZH1 methyltransferase activity. In terms of tissue distribution, expressed at high levels in kidney, adrenal gland, testis and brain.

The protein localises to the nucleus. The enzyme catalyses L-lysyl(27)-[histone H3] + 3 S-adenosyl-L-methionine = N(6),N(6),N(6)-trimethyl-L-lysyl(27)-[histone H3] + 3 S-adenosyl-L-homocysteine + 3 H(+). Functionally, polycomb group (PcG) protein. Catalytic subunit of the PRC2/EED-EZH1 complex, which methylates 'Lys-27' of histone H3, leading to transcriptional repression of the affected target gene. Able to mono-, di- and trimethylate 'Lys-27' of histone H3 to form H3K27me1, H3K27me2 and H3K27me3, respectively. Required for embryonic stem cell derivation and self-renewal, suggesting that it is involved in safeguarding embryonic stem cell identity. Compared to EZH2-containing complexes, it is less abundant in embryonic stem cells, has weak methyltransferase activity and plays a less critical role in forming H3K27me3, which is required for embryonic stem cell identity and proper differentiation. This chain is Histone-lysine N-methyltransferase EZH1 (Ezh1), found in Mus musculus (Mouse).